A 197-amino-acid polypeptide reads, in one-letter code: Phosphoheptose isomerase (197 aa).

An SIS domain is found at 36–197 (MVNALLNEGK…IDSQLFGSEE (162 aa)). 51 to 53 (NGG) provides a ligand contact to substrate. Zn(2+) contacts are provided by His60 and Glu64. Substrate is bound by residues Glu64, 93–94 (ND), 119–121 (STS), Ser124, and Gln174. Zn(2+)-binding residues include Gln174 and His182.

The protein belongs to the SIS family. GmhA subfamily. As to quaternary structure, homotetramer. Zn(2+) is required as a cofactor.

It is found in the cytoplasm. The catalysed reaction is 2 D-sedoheptulose 7-phosphate = D-glycero-alpha-D-manno-heptose 7-phosphate + D-glycero-beta-D-manno-heptose 7-phosphate. Its pathway is carbohydrate biosynthesis; D-glycero-D-manno-heptose 7-phosphate biosynthesis; D-glycero-alpha-D-manno-heptose 7-phosphate and D-glycero-beta-D-manno-heptose 7-phosphate from sedoheptulose 7-phosphate: step 1/1. Functionally, catalyzes the isomerization of sedoheptulose 7-phosphate in D-glycero-D-manno-heptose 7-phosphate. This is Phosphoheptose isomerase from Pseudomonas fluorescens (strain Pf0-1).